The following is a 230-amino-acid chain: Metaxin-2 homolog (230 aa).

Belongs to the metaxin family. As to quaternary structure, associates with the mitochondrial contact site and cristae organizing system (MICOS) complex (also known as MINOS or MitOS complex).

Its subcellular location is the mitochondrion outer membrane. Its function is as follows. Involved in transport of proteins into the mitochondrion. The chain is Metaxin-2 homolog (mtx-2) from Caenorhabditis elegans.